A 580-amino-acid chain; its full sequence is Rap guanine nucleotide exchange factor 5 (580 aa).

The N-terminal Ras-GEF domain maps to 67–200 (DRYVVVSGTP…ELKEFQKILG (134 aa)). Residues 344-579 (NTWDLALELM…FELSHRLEPR (236 aa)) form the Ras-GEF domain.

In terms of tissue distribution, in the embryo, expressed in young neurons of the developing telencephalon, diencephalon and hindbrain. Not expressed in progenitor cells in the ventricular zone.

It is found in the nucleus. Functionally, guanine nucleotide exchange factor (GEF) for RAP1A, RAP2A and MRAS/M-Ras-GTP. Its association with MRAS inhibits Rap1 activation. The sequence is that of Rap guanine nucleotide exchange factor 5 (Rapgef5) from Rattus norvegicus (Rat).